A 483-amino-acid chain; its full sequence is UDP-N-acetylmuramate--L-alanine ligase (483 aa).

125–131 (GTHGKTT) serves as a coordination point for ATP.

It belongs to the MurCDEF family.

The protein localises to the cytoplasm. It catalyses the reaction UDP-N-acetyl-alpha-D-muramate + L-alanine + ATP = UDP-N-acetyl-alpha-D-muramoyl-L-alanine + ADP + phosphate + H(+). It participates in cell wall biogenesis; peptidoglycan biosynthesis. Functionally, cell wall formation. In Pseudoalteromonas translucida (strain TAC 125), this protein is UDP-N-acetylmuramate--L-alanine ligase.